The primary structure comprises 160 residues: uncharacterized protein (160 aa).

The region spanning 7–151 (LLINFKTLEE…NPYIWHPDMD (145 aa)) is the N-acetyltransferase domain.

This is an uncharacterized protein from Bacillus velezensis (strain DSM 23117 / BGSC 10A6 / LMG 26770 / FZB42) (Bacillus amyloliquefaciens subsp. plantarum).